Consider the following 841-residue polypeptide: uncharacterized protein (841 aa).

An N-terminal signal peptide occupies residues 1-31 (MKIERYFKAIARAFIITFLFSLILQDNGVLA).

It localises to the secreted. This is an uncharacterized protein from Schizosaccharomyces pombe (strain 972 / ATCC 24843) (Fission yeast).